The following is a 336-amino-acid chain: Foldase protein PrsA (336 aa).

Positions 1–22 are cleaved as a signal peptide; sequence MKSAKKLLSVLCLGIFILTFTA. The N-palmitoyl cysteine moiety is linked to residue C23. A lipid anchor (S-diacylglycerol cysteine) is attached at C23. A PpiC domain is found at 194-286; the sequence is PNTMNVSHIL…FGYHIIKINS (93 aa).

Belongs to the PrsA family.

Its subcellular location is the cell membrane. The catalysed reaction is [protein]-peptidylproline (omega=180) = [protein]-peptidylproline (omega=0). Its function is as follows. Plays a major role in protein secretion by helping the post-translocational extracellular folding of several secreted proteins. The protein is Foldase protein PrsA of Clostridium botulinum (strain Kyoto / Type A2).